A 32-amino-acid chain; its full sequence is MKAILQVINLVLISVVVIIIPPCGAALGRRKA.

This chain is ilv operon leader peptide (ilvL), found in Yersinia pestis.